A 295-amino-acid chain; its full sequence is Pyridoxal 5'-phosphate synthase subunit PdxS (295 aa).

Residue D23 participates in D-ribose 5-phosphate binding. Catalysis depends on K80, which acts as the Schiff-base intermediate with D-ribose 5-phosphate. Residue G152 coordinates D-ribose 5-phosphate. Residue R164 coordinates D-glyceraldehyde 3-phosphate. D-ribose 5-phosphate contacts are provided by residues G213 and 234–235; that span reads GS.

It belongs to the PdxS/SNZ family. In terms of assembly, in the presence of PdxT, forms a dodecamer of heterodimers.

The catalysed reaction is aldehydo-D-ribose 5-phosphate + D-glyceraldehyde 3-phosphate + L-glutamine = pyridoxal 5'-phosphate + L-glutamate + phosphate + 3 H2O + H(+). It functions in the pathway cofactor biosynthesis; pyridoxal 5'-phosphate biosynthesis. Catalyzes the formation of pyridoxal 5'-phosphate from ribose 5-phosphate (RBP), glyceraldehyde 3-phosphate (G3P) and ammonia. The ammonia is provided by the PdxT subunit. Can also use ribulose 5-phosphate and dihydroxyacetone phosphate as substrates, resulting from enzyme-catalyzed isomerization of RBP and G3P, respectively. The protein is Pyridoxal 5'-phosphate synthase subunit PdxS of Methanopyrus kandleri (strain AV19 / DSM 6324 / JCM 9639 / NBRC 100938).